A 454-amino-acid chain; its full sequence is tRNA modification GTPase MnmE (454 aa).

(6S)-5-formyl-5,6,7,8-tetrahydrofolate is bound by residues arginine 23, glutamate 80, and lysine 120. The region spanning 216–377 is the TrmE-type G domain; sequence GMKVVIAGRP…LRDHLKQSMG (162 aa). A K(+)-binding site is contributed by asparagine 226. Residues 226 to 231, 245 to 251, 270 to 273, 335 to 338, and 358 to 360 each bind GTP; these read NAGKSS, TDIAGTT, DTAG, NKAD, and SAR. Serine 230 lines the Mg(2+) pocket. Residues threonine 245, isoleucine 247, and threonine 250 each coordinate K(+). Mg(2+) is bound at residue threonine 251. Lysine 454 contacts (6S)-5-formyl-5,6,7,8-tetrahydrofolate.

It belongs to the TRAFAC class TrmE-Era-EngA-EngB-Septin-like GTPase superfamily. TrmE GTPase family. Homodimer. Heterotetramer of two MnmE and two MnmG subunits. It depends on K(+) as a cofactor.

The protein localises to the cytoplasm. Functionally, exhibits a very high intrinsic GTPase hydrolysis rate. Involved in the addition of a carboxymethylaminomethyl (cmnm) group at the wobble position (U34) of certain tRNAs, forming tRNA-cmnm(5)s(2)U34. The protein is tRNA modification GTPase MnmE of Yersinia pseudotuberculosis serotype O:1b (strain IP 31758).